Consider the following 79-residue polypeptide: Small ribosomal subunit protein bS18 (79 aa).

This sequence belongs to the bacterial ribosomal protein bS18 family. In terms of assembly, part of the 30S ribosomal subunit. Forms a tight heterodimer with protein bS6.

Functionally, binds as a heterodimer with protein bS6 to the central domain of the 16S rRNA, where it helps stabilize the platform of the 30S subunit. The sequence is that of Small ribosomal subunit protein bS18 from Streptococcus pneumoniae serotype 19F (strain G54).